Here is a 631-residue protein sequence, read N- to C-terminus: Chaperone protein DnaK (631 aa).

A Phosphothreonine; by autocatalysis modification is found at Thr197. The interval 598–631 is disordered; sequence MYKKEQGQTGGTEQGGTEQKKSGGDDDVIDAEVE. Acidic residues predominate over residues 622 to 631; it reads DDDVIDAEVE.

Belongs to the heat shock protein 70 family.

Acts as a chaperone. This Nitratiruptor sp. (strain SB155-2) protein is Chaperone protein DnaK.